We begin with the raw amino-acid sequence, 66 residues long: Ornithorhynchus venom defensin-like peptide A (66 aa).

Residues 1–22 (MRLTYLLLLLVAVLFQAGSGSA) form the signal peptide. A propeptide spanning residues 23 to 24 (EP) is cleaved from the precursor. 3 cysteine pairs are disulfide-bonded: Cys33–Cys63, Cys40–Cys56, and Cys48–Cys64.

In terms of tissue distribution, produced by the crural gland and detected in venom from the spur located on each male hind leg. Is the only OvDLP that is expressed in venom gland alone.

The protein resides in the secreted. Does not show antimicrobial, myotoxic, hemolytic and cell-promoting activities. The protein is Ornithorhynchus venom defensin-like peptide A of Ornithorhynchus anatinus (Duckbill platypus).